The following is a 152-amino-acid chain: Methylglyoxal synthase (152 aa).

An MGS-like domain is found at 6–152; that stretch reads RTLATEKNIA…YEGYLKERLK (147 aa). Residues His-19, Lys-23, 45 to 48, and 65 to 66 each bind substrate; these read TGTT and SG. Asp-71 functions as the Proton donor/acceptor in the catalytic mechanism. His-98 serves as a coordination point for substrate.

Belongs to the methylglyoxal synthase family.

It carries out the reaction dihydroxyacetone phosphate = methylglyoxal + phosphate. Catalyzes the formation of methylglyoxal from dihydroxyacetone phosphate. This Proteus mirabilis (strain HI4320) protein is Methylglyoxal synthase.